We begin with the raw amino-acid sequence, 227 residues long: Small ribosomal subunit protein uS3 (227 aa).

The KH type-2 domain maps to 39–108 (IRKFVEERYK…DVTVNVDEVK (70 aa)).

It belongs to the universal ribosomal protein uS3 family. As to quaternary structure, part of the 30S ribosomal subunit. Forms a tight complex with proteins S10 and S14.

Functionally, binds the lower part of the 30S subunit head. Binds mRNA in the 70S ribosome, positioning it for translation. The protein is Small ribosomal subunit protein uS3 of Persephonella marina (strain DSM 14350 / EX-H1).